Consider the following 309-residue polypeptide: Vomeronasal type-1 receptor 46 (309 aa).

Over 1 to 20 (MNKANIFCTDTNMKVILFSE) the chain is Extracellular. Residues 21-41 (VSVGISANSILFISHLCMFLG) traverse the membrane as a helical segment. Residues 42-50 (ESRPKPIDL) are Cytoplasmic-facing. The helical transmembrane segment at 51 to 71 (YIAFFSLTHLMLLVTMGLIAV) threads the bilayer. Residues 72 to 85 (DMFMPGGRWDSTTC) lie on the Extracellular side of the membrane. Cys85 and Cys171 are disulfide-bonded. A helical transmembrane segment spans residues 86 to 106 (TFLMYLHIVLRGPTLCATCLL). Topologically, residues 107–134 (NVLWTITLSPRNSCLTKFKHKSPHHISG) are cytoplasmic. A helical membrane pass occupies residues 135 to 155 (AFLFLCVLYMSLSSELLSITA). The Extracellular segment spans residues 156–192 (SLNLTSENFLYVSQSCSILPMSYSIKSMFSTKMAIRE). Residue Asn158 is glycosylated (N-linked (GlcNAc...) asparagine). The chain crosses the membrane as a helical span at residues 193–213 (AFLIGLMVLSSGYMVALLWSH). Residues 214–237 (KKQAQHLHSNSLSLKASPEQRATR) are Cytoplasmic-facing. The chain crosses the membrane as a helical span at residues 238-258 (TIMLLMSFFVVFYILDSVIFY). Residues 259–267 (SRMKFKDDS) are Extracellular-facing. Residues 268–288 (IFVCVQIIVSHSYVTVSPFVF) traverse the membrane as a helical segment. Residues 289 to 309 (ICTEKHIIKFFWSLCGRIVNI) are Cytoplasmic-facing.

This sequence belongs to the G-protein coupled receptor 1 family.

The protein localises to the cell membrane. Its function is as follows. Putative pheromone receptor implicated in the regulation of social and reproductive behavior. The protein is Vomeronasal type-1 receptor 46 (Vmn1r46) of Mus musculus (Mouse).